A 323-amino-acid chain; its full sequence is MKPFSLLRRIATIALLMAASSAHADTFPSRPIRLIVPFGPGGITDLIARQAALGMAEKLGQPVIIENKPSAGHIVAMQTVAQATPDGYTILLGSNTGFTVAPHMYKNLPFRIDTLQPIAPINTAPTVLLARPDFPANNLTELIQYIKDNPGKLNYGSFGIGTSAHLGMEIMKSDLGLNIMHIPYRGDAQGLLALKAKEVDIAYITLFSAQARIRAGEFKALGVLQNDRLTAFPDIQTTVEVGSKNSGMPVWIAFFAPPGTPDAVMRKLESATRSASTAPAFVEFLHNNGVEPWNPSNQDLMRFIQDQLNRSGPIIQEIGLQPQ.

The N-terminal stretch at 1–24 is a signal peptide; the sequence is MKPFSLLRRIATIALLMAASSAHA.

The protein belongs to the UPF0065 (bug) family.

The protein localises to the periplasm. The chain is UPF0065 protein BP0148 from Bordetella pertussis (strain Tohama I / ATCC BAA-589 / NCTC 13251).